We begin with the raw amino-acid sequence, 477 residues long: Homeobox protein Meis2 (477 aa).

The interval 71–191 (DALKRDKDAI…KMPIDLVIDE (121 aa)) is required for interaction with PBX1. The region spanning 110 to 193 (GGDVCSSDSF…PIDLVIDERD (84 aa)) is the MEIS N-terminal domain. Residues 193–203 (DGSSKSDHEEL) show a composition bias toward basic and acidic residues. The segment at 193–283 (DGSSKSDHEE…KKRQKKRGIF (91 aa)) is disordered. 2 stretches are compositionally biased toward polar residues: residues 204–217 (SGSS…NPSS) and 239–251 (GHAS…SSEQ). A DNA-binding region (homeobox; TALE-type) is located at residues 276-338 (RQKKRGIFPK…NARRRIVQPM (63 aa)). The tract at residues 299–333 (LTHPYPSEEQKKQLAQDTGLTILQVNNWFINARRR) is interaction with DNA. A transcriptional activation domain region spans residues 340-477 (DQSNRAGFLL…GGQVMDIHAQ (138 aa)).

The protein belongs to the TALE/MEIS homeobox family. In terms of assembly, monomer and homodimer. Heterodimer with HOXB13. Isoform Meis2A interacts with TLX1. Isoform Meis2B interacts with HOXA13 and PBX1 isoform PBX1b. Isoform Meis2D interacts with SP1, SP3 and KLF4. Isoform Meis2D interacts with PBX1 isoform PBX1a; the interaction partially relieves MEIS2 autoinhibition. Isoform Meis2B is part of a PDX1:PBX1b:MEIS2b complex; Meis2B is recruited by PBX1b and can be replaced by isoform Meis2D in a small fraction of complexes. Can form trimeric complexes including HOXB8 and PBX2 or PBX3. As to expression, displays spatially restricted expression patterns in the developing nervous system, limbs, face, and in various viscera. In adult, it is mainly expressed in the brain and female genital tract, with a different distribution of the alternative splice forms in these organs. Lower expression in lung and only basal level in heart, liver, kidney, spleen, and testis. Expressed in pancreatic islets (beta-cells only).

It localises to the nucleus. The protein localises to the cytoplasm. The protein resides in the perinuclear region. Involved in transcriptional regulation. Binds to HOX or PBX proteins to form dimers, or to a DNA-bound dimer of PBX and HOX proteins and thought to have a role in stabilization of the homeoprotein-DNA complex. Isoform Meis2B is required for the activity of a PDX1:PBX1b:MEIS2b complex in pancreatic acinar cells involved in the transcriptional activation of the ELA1 enhancer; the complex binds to the enhancer B element and cooperates with the transcription factor 1 complex (PTF1) bound to the enhancer A element; MEIS2 is not involved in complex DNA-binding. Probably in complex with PBX1, is involved in transcriptional regulation by KLF4. Isoforms Meis2B and Meis2D can bind to a EPHA8 promoter sequence containing the DNA motif 5'-CGGTCA-3'; in cooperation with a PBX protein (such as PBX2) is proposed to be involved in the transcriptional activation of EPHA8 in the developing midbrain. May be involved in regulation of myeloid differentiation. Can bind to the DNA sequence 5'-TGACAG-3'in the activator ACT sequence of the D(1A) dopamine receptor (DRD1) promoter and activate DRD1 transcription. This chain is Homeobox protein Meis2 (Meis2), found in Mus musculus (Mouse).